The sequence spans 186 residues: Peptidyl-tRNA hydrolase (186 aa).

Y14 contributes to the tRNA binding site. The active-site Proton acceptor is H19. The tRNA site is built by Y64, N66, and N112.

The protein belongs to the PTH family. In terms of assembly, monomer.

The protein resides in the cytoplasm. The catalysed reaction is an N-acyl-L-alpha-aminoacyl-tRNA + H2O = an N-acyl-L-amino acid + a tRNA + H(+). Hydrolyzes ribosome-free peptidyl-tRNAs (with 1 or more amino acids incorporated), which drop off the ribosome during protein synthesis, or as a result of ribosome stalling. Its function is as follows. Catalyzes the release of premature peptidyl moieties from peptidyl-tRNA molecules trapped in stalled 50S ribosomal subunits, and thus maintains levels of free tRNAs and 50S ribosomes. In Bacillus cereus (strain ATCC 14579 / DSM 31 / CCUG 7414 / JCM 2152 / NBRC 15305 / NCIMB 9373 / NCTC 2599 / NRRL B-3711), this protein is Peptidyl-tRNA hydrolase.